The chain runs to 274 residues: Penicillin-insensitive murein endopeptidase (274 aa).

The N-terminal stretch at 1–19 (MKNTVIALLALLASAGSLA) is a signal peptide. Cystine bridges form between cysteine 44–cysteine 265, cysteine 187–cysteine 235, and cysteine 216–cysteine 223. Zn(2+) is bound by residues histidine 110, histidine 113, aspartate 120, aspartate 147, histidine 150, and histidine 211. Residues 224–263 (EDQAPPPPGDGCGAELQSWFEPPKPGSTPPVKKTPPPLPP) form a disordered region. Pro residues predominate over residues 245 to 263 (PPKPGSTPPVKKTPPPLPP).

This sequence belongs to the peptidase M74 family. Dimer. Zn(2+) is required as a cofactor.

The protein resides in the periplasm. Functionally, murein endopeptidase that cleaves the D-alanyl-meso-2,6-diamino-pimelyl amide bond that connects peptidoglycan strands. Likely plays a role in the removal of murein from the sacculus. The protein is Penicillin-insensitive murein endopeptidase of Klebsiella pneumoniae (strain 342).